Reading from the N-terminus, the 405-residue chain is S-arrestin (405 aa).

Phosphothreonine is present on Thr234.

It belongs to the arrestin family. Monomer. Homodimer. Homotetramer. Interacts with RHO (via the phosphorylated C-terminus). As to expression, detected in retina, in the proximal portion of the outer segment of rod photoreceptor cells (at protein level).

The protein localises to the cell projection. Its subcellular location is the cilium. The protein resides in the photoreceptor outer segment. It localises to the membrane. Binds to photoactivated, phosphorylated RHO and terminates RHO signaling via G-proteins by competing with G-proteins for the same binding site on RHO. May play a role in preventing light-dependent degeneration of retinal photoreceptor cells. This Homo sapiens (Human) protein is S-arrestin (SAG).